Reading from the N-terminus, the 447-residue chain is MGRTYIVEETVGQYLSSINLQGKPFVSGLLIGQCSSQKDYVILATRTPPKEEQNDKVKQPRAKLDNLDEEWATEHASQVSRMLPGGLVVLGIFIITTLELADDFQNALRRLIFSMEKSMSRKRLWDVTEDEVSERVTLHICSSTKKISCRTYDVQDPKSSARPADWKYQSRVSASWLSLDCTVHVNIHIPLSATSVSYTLEKNTKSGLTRWAKQIENGVYLINGQVKGNDCDLLEGQKKSRGNTQATAHSFDVRVLTQLLLNSDHRSTATVQICSGSVNLRGNVKCRAYIHSNRPKVKDAVQAVKRDILNTVADRCEILFEDLLLNEIPEKKNYELPQRVFVPLPGSTVMLCDYKFGDESAEEIRDHFSEMLDHEIQIEDLEIAEEVNTACMTSSVNSEASLTNTSEEQPEQPKKTIGVKIQQNIGVIAALAVAVLAAGISFHYFSD.

The next 2 helical transmembrane spans lie at 82-102 (MLPGGLVVLGIFIITTLELAD) and 425-445 (IGVIAALAVAVLAAGISFHYF).

Belongs to the ODR-4 family. Ubiquitously expressed.

Its subcellular location is the membrane. Its function is as follows. May play a role in the trafficking of a subset of G-protein coupled receptors. This Mus musculus (Mouse) protein is Protein odr-4 homolog (Odr4).